A 461-amino-acid chain; its full sequence is Coagulation factor IX (461 aa).

Residues 1-28 form the signal peptide; that stretch reads MQRVNMIMAESPGLITICLLGYLLSAEC. The propeptide occupies 29-46; sequence TVFLDHENANKILNRPKR. 11 residues coordinate Ca(2+): Tyr-47, Asn-48, Glu-53, Glu-54, Glu-61, Glu-63, Glu-66, Glu-67, Glu-72, Glu-73, and Glu-76. One can recognise a Gla domain in the interval 47–92; that stretch reads YNSGKLEEFVQGNLERECMEEKCSFEEAREVFENTERTTEFWKQYV. 11 positions are modified to 4-carboxyglutamate: Glu-53, Glu-54, Glu-61, Glu-63, Glu-66, Glu-67, Glu-72, Glu-73, Glu-76, Glu-79, and Glu-82. Residue Glu-61 participates in Mg(2+) binding. Cys-64 and Cys-69 form a disulfide bridge. Mg(2+) is bound at residue Glu-66. Residue Glu-72 participates in Mg(2+) binding. Glu-76 lines the Mg(2+) pocket. Glu-82 serves as a coordination point for Ca(2+). Glu-82 contributes to the Mg(2+) binding site. Residue Thr-85 is glycosylated (O-linked (GalNAc...) threonine). The Ca(2+) site is built by Glu-86, Asp-93, Gly-94, and Gln-96. The residue at position 86 (Glu-86) is a 4-carboxyglutamate. Glu-86 serves as a coordination point for Mg(2+). In terms of domain architecture, EGF-like 1; calcium-binding spans 93–129; that stretch reads DGDQCESNPCLNGGSCKDDINSYECWCPFGFEGKNCE. Cystine bridges form between Cys-97–Cys-108, Cys-102–Cys-117, Cys-119–Cys-128, Cys-134–Cys-145, Cys-141–Cys-155, Cys-157–Cys-170, Cys-178–Cys-335, Cys-252–Cys-268, Cys-382–Cys-396, and Cys-407–Cys-435. Ser-99 carries O-linked (Glc...) serine glycosylation. A glycan (O-linked (Fuc...) serine) is linked at Ser-107. Residues Asp-110 and Asp-111 each coordinate Ca(2+). Residue Asp-110 is modified to (3R)-3-hydroxyaspartate. At Ser-114 the chain carries Phosphoserine. In terms of domain architecture, EGF-like 2 spans 130-171; that stretch reads LDVTCNIKNGRCEQFCKNSADNKVVCSCTEGYRLAENQKSCE. A propeptide spans 192–226 (activation peptide); that stretch reads AETVFPDVDYVNSTEAETILDNITQSTQSFNDFTR. The residue at position 201 (Tyr-201) is a Sulfotyrosine. Residue Asn-203 is glycosylated (N-linked (GlcNAc...) asparagine). At Ser-204 the chain carries Phosphoserine. Thr-205 is modified (phosphothreonine; alternate). Thr-205 carries O-linked (GalNAc...) threonine; alternate glycosylation. Asn-213 is a glycosylation site (N-linked (GlcNAc...) asparagine). Residues Thr-215 and Thr-225 are each glycosylated (O-linked (GalNAc...) threonine). Residues 227-459 enclose the Peptidase S1 domain; it reads VVGGEDAKPG…YVNWIKEKTK (233 aa). His-267 acts as the Charge relay system in catalysis. Positions 281, 283, 286, 288, and 291 each coordinate Ca(2+). Asp-315 acts as the Charge relay system in catalysis. Ser-411 functions as the Charge relay system in the catalytic mechanism.

This sequence belongs to the peptidase S1 family. In terms of assembly, heterodimer of a light chain and a heavy chain; disulfide-linked. Interacts (inactive and activated) with F11 (activated) in calcium-dependent manner. Interacts with SERPINC1. Interacts (activated) with iripin-8, a serine protease inhibitor from Ixodes ricinus saliva. Interacts (inactive and activated) with nitrophorin-2, an anticoagulant protein from Rhodnius prolixus. In terms of processing, activated by factor XIa, which excises the activation peptide. The propeptide can also be removed by snake venom protease. Activated by coagulation factor VIIa-tissue factor (F7-F3) complex in calcium-dependent manner. Post-translationally, the iron and 2-oxoglutarate dependent 3-hydroxylation of aspartate and asparagine is (R) stereospecific within EGF domains. In terms of tissue distribution, detected in blood plasma (at protein level). Synthesized primarily in the liver and secreted in plasma.

Its subcellular location is the secreted. The enzyme catalyses Selective cleavage of Arg-|-Ile bond in factor X to form factor Xa.. In terms of biological role, factor IX is a vitamin K-dependent plasma protein that participates in the intrinsic pathway of blood coagulation by converting factor X to its active form in the presence of Ca(2+) ions, phospholipids, and factor VIIIa. This is Coagulation factor IX (F9) from Homo sapiens (Human).